We begin with the raw amino-acid sequence, 500 residues long: Lycopene beta cyclase, chloroplastic (500 aa).

The N-terminal 81 residues, 1–81, are a transit peptide targeting the chloroplast; that stretch reads MDTLLKTPNN…ELPMYDPSKG (81 aa). 86-114 provides a ligand contact to NAD(+); sequence LAVVGGGPAGLAVAQQVSEAGLSVCSIDP.

The protein belongs to the lycopene cyclase family.

Its subcellular location is the plastid. It is found in the chloroplast. It catalyses the reaction a carotenoid psi-end group = a carotenoid beta-end derivative. It functions in the pathway carotenoid biosynthesis; beta-carotene biosynthesis. It participates in carotenoid biosynthesis; beta-zeacarotene biosynthesis. Its function is as follows. Catalyzes the double cyclization reaction which converts lycopene to beta-carotene and neurosporene to beta-zeacarotene. This chain is Lycopene beta cyclase, chloroplastic (LCY1), found in Solanum lycopersicum (Tomato).